A 658-amino-acid polypeptide reads, in one-letter code: Katanin p80 WD40 repeat-containing subunit B1 (658 aa).

Positions 1–284 (MATPVVTKTA…VADLAICNDQ (284 aa)) are interaction with dynein. Residues 1 to 300 (MATPVVTKTA…SQSNVSSYVV (300 aa)) are interaction with centrosomes. 6 WD repeats span residues 18–58 (AHAS…CIMS), 61–100 (GHTS…ILRT), 103–142 (GHKA…CVFR), 145–184 (GHSQ…MMSE), 187–226 (GHTG…VVSC), and 229–269 (GEPG…DVVL). The tract at residues 285-437 (LIGVAFSQSN…LPQLPVPNLE (153 aa)) is interaction with PAFAH1B1. Polar residues predominate over residues 311 to 329 (VTQDPVQANQPLTQQTPNP). 2 disordered regions span residues 311-419 (VTQD…EVSK) and 434-458 (PNLE…PDII). The segment covering 352–374 (HNSESERRSPSSEDDRDERESRA) has biased composition (basic and acidic residues). Thr395 carries the post-translational modification Phosphothreonine. An interaction with KATNA1 and NDEL1 region spans residues 436 to 658 (LEVPARPSVM…ELHLLMASLD (223 aa)).

This sequence belongs to the WD repeat KATNB1 family. Interacts with KATNA1. This interaction enhances the microtubule binding and severing activity of KATNA1 and also targets this activity to the centrosome. This interaction is weakly competed by KATNBL1 which has a lower affinity for it. Interacts with ASPM; the katanin complex formation KATNA1:KATNB1 is required for the association of ASPM. Interacts with dynein, microtubules, NDEL1 and PAFAH1B1. Interacts with KATNAL1; this interaction is weakly competed by KATNBL1 which has a lower affinity for it. Interacts with CAMSAP2 and CAMSAP3; leading to regulate the length of CAMSAP-decorated microtubule stretches.

It localises to the cytoplasm. It is found in the cytoskeleton. Its subcellular location is the microtubule organizing center. The protein resides in the centrosome. The protein localises to the spindle pole. It localises to the spindle. In terms of biological role, participates in a complex which severs microtubules in an ATP-dependent manner. May act to target the enzymatic subunit of this complex to sites of action such as the centrosome. Microtubule severing may promote rapid reorganization of cellular microtubule arrays and the release of microtubules from the centrosome following nucleation. Microtubule release from the mitotic spindle poles may allow depolymerization of the microtubule end proximal to the spindle pole, leading to poleward microtubule flux and poleward motion of chromosome. The function in regulating microtubule dynamics at spindle poles seems to depend on the association of the katanin KATNA1:KATNB1 complex with ASPM which recruits it to microtubules. Reversely KATNA1:KATNB1 can enhance ASPM blocking activity on microtubule minus-end growth. Microtubule release within the cell body of neurons may be required for their transport into neuronal processes by microtubule-dependent motor proteins. This transport is required for axonal growth. The chain is Katanin p80 WD40 repeat-containing subunit B1 (Katnb1) from Mus musculus (Mouse).